A 184-amino-acid chain; its full sequence is dCTP deaminase (184 aa).

DCTP contacts are provided by residues 107–112 (KSTYAR), 131–133 (TLE), Gln152, Tyr166, and Gln176. The active-site Proton donor/acceptor is the Glu133.

It belongs to the dCTP deaminase family. As to quaternary structure, homotrimer.

The catalysed reaction is dCTP + H2O + H(+) = dUTP + NH4(+). It participates in pyrimidine metabolism; dUMP biosynthesis; dUMP from dCTP (dUTP route): step 1/2. In terms of biological role, catalyzes the deamination of dCTP to dUTP. This chain is dCTP deaminase, found in Novosphingobium aromaticivorans (strain ATCC 700278 / DSM 12444 / CCUG 56034 / CIP 105152 / NBRC 16084 / F199).